The chain runs to 714 residues: Transcription activator of gluconeogenesis UREG_00958 (714 aa).

The tract at residues M1 to R71 is disordered. Residues E38 to N62 are compositionally biased toward polar residues. A DNA-binding region (zn(2)-C6 fungal-type) is located at residues C78–C106. Disordered regions lie at residues S176–G228, G274–P312, and N539–S567. Residues F191–G228 show a composition bias toward polar residues. Residues G545–S555 are compositionally biased toward low complexity.

It belongs to the ERT1/acuK family.

It is found in the nucleus. Functionally, transcription factor which regulates nonfermentable carbon utilization. Activator of gluconeogenetic genes. The sequence is that of Transcription activator of gluconeogenesis UREG_00958 from Uncinocarpus reesii (strain UAMH 1704).